Consider the following 504-residue polypeptide: uncharacterized protein (504 aa).

Residues 6 to 26 traverse the membrane as a helical segment; sequence NLFIIFIFLFLLSQVSAYITF.

This sequence to M.jannaschii MJ1506 and MJ1561.

It is found in the membrane. This is an uncharacterized protein from Methanocaldococcus jannaschii (strain ATCC 43067 / DSM 2661 / JAL-1 / JCM 10045 / NBRC 100440) (Methanococcus jannaschii).